Reading from the N-terminus, the 296-residue chain is L-fucono-1,5-lactonase (296 aa).

This sequence belongs to the metallo-dependent hydrolases superfamily. In terms of assembly, monomer. It depends on Does not require a divalent metal for activity. The purified enzyme contains Zn(2+), but the addition of chelators does not diminish the catalytic activity of the enzyme, indicating that it does not require a divalent cation for substrate turnover. as a cofactor.

It catalyses the reaction L-fucono-1,5-lactone + H2O = L-fuconate + H(+). It carries out the reaction L-fucono-1,4-lactone + H2O = L-fuconate + H(+). The catalysed reaction is D-arabinono-1,4-lactone + H2O = D-arabinonate + H(+). The enzyme catalyses L-xylono-1,4-lactone + H2O = L-xylonate + H(+). It catalyses the reaction L-galactono-1,4-lactone + H2O = L-galactonate + H(+). Its pathway is carbohydrate degradation; L-fucose degradation. Functionally, L-fucono-1,5-lactonase involved in an L-fucose degradation pathway. Catalyzes the hydrolysis of L-fucono-1,5-lactone to L-fuconate. L-fucono-1,5-lactone is the best substrate, but the enzyme can also hydrolyze L-fucono-1,4-lactone, L-galactono-1,4-lactone D-arabinono-1,4-lactone and L-xylono-1,4-lactone. The chain is L-fucono-1,5-lactonase from Burkholderia multivorans (strain ATCC 17616 / 249).